The sequence spans 425 residues: Oxalate decarboxylase ARB_02208 (425 aa).

Residues 1-19 (MKFGSALVAAVAAVAGVAA) form the signal peptide. Residues 73 to 236 (FSLSKTRMFH…FNISTGGTFD (164 aa)) enclose the Cupin type-1 1 domain. Mn(2+) contacts are provided by histidine 116, histidine 118, glutamate 122, and histidine 161. Residues asparagine 228, asparagine 247, asparagine 254, and asparagine 265 are each glycosylated (N-linked (GlcNAc...) asparagine). A Cupin type-1 2 domain is found at 270–414 (FHIRDAPEIQ…AINVPIDVID (145 aa)). Residues histidine 317, histidine 319, glutamate 324, and histidine 363 each contribute to the Mn(2+) site. Asparagine 367 carries N-linked (GlcNAc...) asparagine glycosylation. The active-site Proton donor is glutamate 378.

Mn(2+) is required as a cofactor.

It localises to the secreted. It catalyses the reaction oxalate + H(+) = formate + CO2. Its function is as follows. Converts oxalate to formate and CO(2) in an O(2)-dependent reaction. Can also catalyze minor side reactions: oxalate oxidation to produce H(2)O(2), and oxalate-dependent, H(2)O(2)-independent dye oxidations. The sequence is that of Oxalate decarboxylase ARB_02208 from Arthroderma benhamiae (strain ATCC MYA-4681 / CBS 112371) (Trichophyton mentagrophytes).